Reading from the N-terminus, the 281-residue chain is Acetylglutamate kinase (281 aa).

Residues G64–G65, R86, and N179 each bind substrate.

It belongs to the acetylglutamate kinase family. ArgB subfamily.

It localises to the cytoplasm. The catalysed reaction is N-acetyl-L-glutamate + ATP = N-acetyl-L-glutamyl 5-phosphate + ADP. Its pathway is amino-acid biosynthesis; L-arginine biosynthesis; N(2)-acetyl-L-ornithine from L-glutamate: step 2/4. Its function is as follows. Catalyzes the ATP-dependent phosphorylation of N-acetyl-L-glutamate. This Campylobacter curvus (strain 525.92) protein is Acetylglutamate kinase.